The primary structure comprises 320 residues: Tyrosine phosphatase H3 (320 aa).

Residues asparagine 22–alanine 309 enclose the Tyrosine-protein phosphatase domain. Cysteine 250 functions as the Phosphocysteine intermediate in the catalytic mechanism.

The protein belongs to the protein-tyrosine phosphatase family.

The enzyme catalyses O-phospho-L-tyrosyl-[protein] + H2O = L-tyrosyl-[protein] + phosphate. Its function is as follows. Suppresses host immune cell adhesion and phagocytosis. This chain is Tyrosine phosphatase H3 (H3), found in Microplitis demolitor (Parasitoid wasp).